Reading from the N-terminus, the 1422-residue chain is DNA-directed RNA polymerase subunit beta (1422 aa).

The interval 1392 to 1422 (QAAREAAERDLGGGPLGAPRGAVASGEKSSA) is disordered.

The protein belongs to the RNA polymerase beta chain family. As to quaternary structure, the RNAP catalytic core consists of 2 alpha, 1 beta, 1 beta' and 1 omega subunit. When a sigma factor is associated with the core the holoenzyme is formed, which can initiate transcription.

It catalyses the reaction RNA(n) + a ribonucleoside 5'-triphosphate = RNA(n+1) + diphosphate. DNA-dependent RNA polymerase catalyzes the transcription of DNA into RNA using the four ribonucleoside triphosphates as substrates. This Anaeromyxobacter dehalogenans (strain 2CP-1 / ATCC BAA-258) protein is DNA-directed RNA polymerase subunit beta.